The sequence spans 297 residues: Protein phosphatase PTC7 homolog (297 aa).

The transit peptide at 1-27 directs the protein to the mitochondrion; it reads MFSVLSCGRLVARAVFGGLSQTDSRDY. Residues 28-292 enclose the PPM-type phosphatase domain; that stretch reads SLVTASCGFG…DDITVLLSIV (265 aa). Asp-71, Gly-72, and Asp-216 together coordinate Mn(2+).

Belongs to the PP2C family. The cofactor is Mg(2+). Mn(2+) is required as a cofactor.

It localises to the mitochondrion matrix. The enzyme catalyses O-phospho-L-seryl-[protein] + H2O = L-seryl-[protein] + phosphate. It catalyses the reaction O-phospho-L-threonyl-[protein] + H2O = L-threonyl-[protein] + phosphate. Its function is as follows. Protein phosphatase which positively regulates biosynthesis of the ubiquinone, coenzyme Q. Dephosphorylates the ubiquinone biosynthesis protein coq7 which is likely to lead to its activation. This chain is Protein phosphatase PTC7 homolog (pptc7), found in Xenopus laevis (African clawed frog).